A 284-amino-acid chain; its full sequence is tRNA pseudouridine synthase A (284 aa).

Catalysis depends on Asp62, which acts as the Nucleophile. Substrate is bound at residue Tyr123.

This sequence belongs to the tRNA pseudouridine synthase TruA family. In terms of assembly, homodimer.

The enzyme catalyses uridine(38/39/40) in tRNA = pseudouridine(38/39/40) in tRNA. Formation of pseudouridine at positions 38, 39 and 40 in the anticodon stem and loop of transfer RNAs. In Streptomyces griseus subsp. griseus (strain JCM 4626 / CBS 651.72 / NBRC 13350 / KCC S-0626 / ISP 5235), this protein is tRNA pseudouridine synthase A.